The sequence spans 207 residues: MANILHIDSSPRGDRSISRKLSYEFLTSWKDTHPGDTVTYRDLGHNPVPHVDEPWIAAAFSSPDSHTPELKAAIELSDTLIDEFLAADRFVFGVPMYNLNIPSTFKAYIDQIVRVGRTFSVDANGYKGLVDSSKKVLIITSRGGSYPPGTPYAAYDYQEPYLRAILGFMGLTDVTFIHAESLNMGEDAREKSLADAKDAIAQAVANW.

FMN is bound by residues serine 10, 16-18 (SIS), 96-99 (MYNL), and 141-144 (SRGG).

It belongs to the azoreductase type 1 family. In terms of assembly, homodimer. FMN is required as a cofactor.

It carries out the reaction 2 a quinone + NADH + H(+) = 2 a 1,4-benzosemiquinone + NAD(+). The enzyme catalyses N,N-dimethyl-1,4-phenylenediamine + anthranilate + 2 NAD(+) = 2-(4-dimethylaminophenyl)diazenylbenzoate + 2 NADH + 2 H(+). In terms of biological role, quinone reductase that provides resistance to thiol-specific stress caused by electrophilic quinones. Its function is as follows. Also exhibits azoreductase activity. Catalyzes the reductive cleavage of the azo bond in aromatic azo compounds to the corresponding amines. The chain is FMN-dependent NADH:quinone oxidoreductase 2 from Trichormus variabilis (strain ATCC 29413 / PCC 7937) (Anabaena variabilis).